We begin with the raw amino-acid sequence, 174 residues long: Superoxide dismutase [Cu-Zn] (174 aa).

A signal peptide spans 1 to 23; that stretch reads MIRLSAAAALGLAAALAASPALA. Positions 68, 70, and 86 each coordinate Cu cation. A disulfide bridge links Cys75 with Cys170. Residues His86, His95, Asp104, and Asp107 each coordinate Zn(2+). His150 contributes to the Cu cation binding site.

It belongs to the Cu-Zn superoxide dismutase family. Homodimer. The cofactor is Cu cation. Zn(2+) is required as a cofactor.

Its subcellular location is the periplasm. The catalysed reaction is 2 superoxide + 2 H(+) = H2O2 + O2. Its function is as follows. Destroys radicals which are normally produced within the cells and which are toxic to biological systems. May function against extracytoplasmic toxic oxygen species. The chain is Superoxide dismutase [Cu-Zn] (sodC) from Caulobacter vibrioides (strain ATCC 19089 / CIP 103742 / CB 15) (Caulobacter crescentus).